The chain runs to 389 residues: UDP-N-acetylglucosamine--N-acetylmuramyl-(pentapeptide) pyrophosphoryl-undecaprenol N-acetylglucosamine transferase (389 aa).

Residues 17 to 19 (TAG), N137, R179, S213, and Q308 each bind UDP-N-acetyl-alpha-D-glucosamine.

Belongs to the glycosyltransferase 28 family. MurG subfamily.

It localises to the cell membrane. The enzyme catalyses di-trans,octa-cis-undecaprenyl diphospho-N-acetyl-alpha-D-muramoyl-L-alanyl-D-glutamyl-meso-2,6-diaminopimeloyl-D-alanyl-D-alanine + UDP-N-acetyl-alpha-D-glucosamine = di-trans,octa-cis-undecaprenyl diphospho-[N-acetyl-alpha-D-glucosaminyl-(1-&gt;4)]-N-acetyl-alpha-D-muramoyl-L-alanyl-D-glutamyl-meso-2,6-diaminopimeloyl-D-alanyl-D-alanine + UDP + H(+). It functions in the pathway cell wall biogenesis; peptidoglycan biosynthesis. In terms of biological role, cell wall formation. Catalyzes the transfer of a GlcNAc subunit on undecaprenyl-pyrophosphoryl-MurNAc-pentapeptide (lipid intermediate I) to form undecaprenyl-pyrophosphoryl-MurNAc-(pentapeptide)GlcNAc (lipid intermediate II). In Rhodococcus erythropolis (strain PR4 / NBRC 100887), this protein is UDP-N-acetylglucosamine--N-acetylmuramyl-(pentapeptide) pyrophosphoryl-undecaprenol N-acetylglucosamine transferase.